A 120-amino-acid chain; its full sequence is Photosystem II extrinsic protein U (120 aa).

Residues 1–29 (MKRLLSLLTGVLVMTGLLMALIFPQSAYA) form the signal peptide.

It belongs to the PsbU family. As to quaternary structure, PSII is composed of 1 copy each of membrane proteins PsbA, PsbB, PsbC, PsbD, PsbE, PsbF, PsbH, PsbI, PsbJ, PsbK, PsbL, PsbM, PsbT, PsbX, PsbY, Psb30/Ycf12, peripheral proteins PsbO, CyanoQ (PsbQ), PsbU, PsbV and a large number of cofactors. It forms dimeric complexes.

It is found in the cellular thylakoid membrane. Its function is as follows. One of the extrinsic, lumenal subunits of photosystem II (PSII). PSII is a light-driven water plastoquinone oxidoreductase, using light energy to abstract electrons from H(2)O, generating a proton gradient subsequently used for ATP formation. The extrinsic proteins stabilize the structure of photosystem II oxygen-evolving complex (OEC), the ion environment of oxygen evolution and protect the OEC against heat-induced inactivation. This Prochlorococcus marinus (strain MIT 9313) protein is Photosystem II extrinsic protein U.